The primary structure comprises 311 residues: Heme A synthase (311 aa).

Residues 1–6 lie on the Cytoplasmic side of the membrane; the sequence is MQRFIK. Residues 7–27 traverse the membrane as a helical segment; the sequence is WLAVITSLDLLIVLLGGALVT. At 28–62 the chain is on the extracellular side; that stretch reads KTGSGQGCGKSWPLCNGEFVPSNLSMETIIELSHR. C35 and C42 are joined by a disulfide. Residue E58 is part of the active site. A heme o-binding site is contributed by H61. A helical transmembrane segment spans residues 63–83; the sequence is LTSGSAGILVTLLCILSWKYY. Topologically, residues 84-91 are cytoplasmic; the sequence is KHVRETKT. Residues 92-112 form a helical membrane-spanning segment; sequence LAILSFVFLVAQALMGAAAVV. The Extracellular portion of the chain corresponds to 113 to 121; it reads WGQMPAVLA. Residues 122–142 form a helical membrane-spanning segment; it reads IHFGISLISFASVILLTCLIF. Position 123 (H123) interacts with heme o. Residues 143–159 are Cytoplasmic-facing; that stretch reads EIDQKFDARSLIMDKKM. Residues 160-180 traverse the membrane as a helical segment; that stretch reads KFHIYGVTIYSYIVVYTGALV. Residues 181–211 are Extracellular-facing; that stretch reads RHERASLACPDFPLCSKNRPMPTQLHEWVQM. C189 and C195 form a disulfide bridge. The helical transmembrane segment at 212-232 threads the bilayer; it reads GHRVAAMLIFAWILYAMILAI. H213 contacts heme b. Over 233–243 the chain is Cytoplasmic; the sequence is RHYKQQPVVYW. The chain crosses the membrane as a helical span at residues 244-264; sequence GWIISFILVTLQAVVGVLVVF. Topologically, residues 265 to 271 are extracellular; the sequence is TNASLAM. Residues 272-292 traverse the membrane as a helical segment; the sequence is ALLHSLFISCLFAVLCYLVML. Heme b is bound at residue H275. Topologically, residues 293–311 are cytoplasmic; sequence GTRSKVNAKEAELTSKQTK.

This sequence belongs to the COX15/CtaA family. Type 1 subfamily. Interacts with CtaB. The cofactor is heme b.

It is found in the cell membrane. The enzyme catalyses Fe(II)-heme o + 2 A + H2O = Fe(II)-heme a + 2 AH2. It functions in the pathway porphyrin-containing compound metabolism; heme A biosynthesis; heme A from heme O: step 1/1. Catalyzes the conversion of heme O to heme A by two successive hydroxylations of the methyl group at C8. The first hydroxylation forms heme I, the second hydroxylation results in an unstable dihydroxymethyl group, which spontaneously dehydrates, resulting in the formyl group of heme A. In Bacillus cereus (strain ATCC 14579 / DSM 31 / CCUG 7414 / JCM 2152 / NBRC 15305 / NCIMB 9373 / NCTC 2599 / NRRL B-3711), this protein is Heme A synthase.